The sequence spans 449 residues: Glucose-6-phosphate isomerase (449 aa).

The Proton donor role is filled by Glu291. Active-site residues include His312 and Lys426.

The protein belongs to the GPI family.

It is found in the cytoplasm. The catalysed reaction is alpha-D-glucose 6-phosphate = beta-D-fructose 6-phosphate. It participates in carbohydrate biosynthesis; gluconeogenesis. Its pathway is carbohydrate degradation; glycolysis; D-glyceraldehyde 3-phosphate and glycerone phosphate from D-glucose: step 2/4. In terms of biological role, catalyzes the reversible isomerization of glucose-6-phosphate to fructose-6-phosphate. The chain is Glucose-6-phosphate isomerase from Streptococcus thermophilus (strain CNRZ 1066).